The sequence spans 271 residues: Insulin-like growth factor-binding protein 5 (271 aa).

The signal sequence occupies residues 1–19; sequence MVLTAVLLLLAACAGSAQG. The 81-residue stretch at 22-102 folds into the IGFBP N-terminal domain; it reads SFVHCEPCDE…LHGRGVCLNE (81 aa). 6 cysteine pairs are disulfide-bonded: cysteine 26–cysteine 52, cysteine 29–cysteine 54, cysteine 37–cysteine 55, cysteine 44–cysteine 58, cysteine 66–cysteine 79, and cysteine 73–cysteine 99. Residues 109–121 show a composition bias toward basic and acidic residues; it reads AKIERDSREHEEP. A disordered region spans residues 109-129; that stretch reads AKIERDSREHEEPTTSEMAEE. The residue at position 115 (serine 115) is a Phosphoserine. Residues 188-262 enclose the Thyroglobulin type-1 domain; that stretch reads QGPCRRHMEA…MEYVDGDFQC (75 aa). Intrachain disulfides connect cysteine 191/cysteine 218, cysteine 229/cysteine 240, and cysteine 242/cysteine 262.

In terms of assembly, interacts with IGF1; this interaction enhances the growth stimulatory effects of IGF1 on fibroblasts. Interacts with CAV1; this interaction allows trafficking of IGFBP5 from the plasma membrane to the nucleus. Interacts with NCL; this interaction is necessary for IGFBP5 localization to the nucleus.

The protein localises to the secreted. Its subcellular location is the cytoplasm. It is found in the nucleus. Its function is as follows. Multifunctional protein that plays a critical role in regulating the availability of IGFs to their receptors and thereby regulates IGF-mediated cellular processes including proliferation, differentiation, and apoptosis in a cell-type specific manner. Increases the cell proliferation of osteoblasts, intestinal smooth muscle cells and neuroblastoma cells. Enhances adhesion and survival of epithelial cells but decreases adhesion of mesenchymal cells. Once secreted, acts as a major mediator of mTORC1-dependent feedback inhibition of IGF1 signaling. Also plays a role in the induction of extracellular matrix (ECM) production and deposition independently of its nuclear translocation and binding to IGFs. Acts itself as a growth factor that can act independently of IGFs to regulate bone formation. Acts as a ligand for the ROR1 receptor which triggers formation of ROR1/HER2 heterodimer to enhance CREB oncogenic signaling. This Bos taurus (Bovine) protein is Insulin-like growth factor-binding protein 5 (IGFBP5).